Consider the following 336-residue polypeptide: Anthranilate phosphoribosyltransferase (336 aa).

5-phospho-alpha-D-ribose 1-diphosphate contacts are provided by residues Gly79, 82–83, Thr87, 89–92, 107–115, and Ser119; these read GD, NIST, and KHGNRSVSS. An anthranilate-binding site is contributed by Gly79. Ser91 is a Mg(2+) binding site. Position 110 (Asn110) interacts with anthranilate. Anthranilate is bound at residue Arg165. Mg(2+)-binding residues include Asp224 and Glu225.

Belongs to the anthranilate phosphoribosyltransferase family. As to quaternary structure, homodimer. Requires Mg(2+) as cofactor.

It carries out the reaction N-(5-phospho-beta-D-ribosyl)anthranilate + diphosphate = 5-phospho-alpha-D-ribose 1-diphosphate + anthranilate. It participates in amino-acid biosynthesis; L-tryptophan biosynthesis; L-tryptophan from chorismate: step 2/5. Catalyzes the transfer of the phosphoribosyl group of 5-phosphorylribose-1-pyrophosphate (PRPP) to anthranilate to yield N-(5'-phosphoribosyl)-anthranilate (PRA). The sequence is that of Anthranilate phosphoribosyltransferase from Endomicrobium trichonymphae.